Reading from the N-terminus, the 982-residue chain is Coatomer subunit beta (982 aa).

HEAT repeat units lie at residues 16–53 (SGAP…NGEP), 130–167 (ELVE…RFPE), 241–278 (YDKG…SPTA), and 317–352 (LQDS…NQNS).

As to quaternary structure, oligomeric complex that consists of at least the alpha, beta, beta', gamma, delta, epsilon and zeta subunits.

The protein resides in the cytoplasm. It localises to the golgi apparatus membrane. The protein localises to the cytoplasmic vesicle. It is found in the COPI-coated vesicle membrane. In terms of biological role, the coatomer is a cytosolic protein complex that binds to dilysine motifs and reversibly associates with Golgi non-clathrin-coated vesicles, which further mediate biosynthetic protein transport from the ER, via the Golgi up to the trans Golgi network. Coatomer complex is required for budding from Golgi membranes, and is essential for the retrograde Golgi-to-ER transport of dilysine-tagged proteins. The protein is Coatomer subunit beta of Trypanosoma brucei brucei.